Consider the following 545-residue polypeptide: CTP synthase (545 aa).

The interval 1–266 (MKTNYIFVTG…DDYICKRFSL (266 aa)) is amidoligase domain. A CTP-binding site is contributed by Ser14. Residue Ser14 coordinates UTP. ATP-binding positions include 15–20 (SLGKGI) and Asp72. The Mg(2+) site is built by Asp72 and Glu140. CTP is bound by residues 147 to 149 (DIE), 187 to 192 (KTKPTQ), and Lys223. UTP is bound by residues 187–192 (KTKPTQ) and Lys223. An ATP-binding site is contributed by 239-241 (KDV). Residues 291–542 (TIGMVGKYVE…VKAAGKYQKG (252 aa)) enclose the Glutamine amidotransferase type-1 domain. Residue Gly352 participates in L-glutamine binding. Cys379 (nucleophile; for glutamine hydrolysis) is an active-site residue. L-glutamine-binding positions include 380-383 (LGMQ), Glu403, and Arg470. Active-site residues include His515 and Glu517.

The protein belongs to the CTP synthase family. In terms of assembly, homotetramer.

It catalyses the reaction UTP + L-glutamine + ATP + H2O = CTP + L-glutamate + ADP + phosphate + 2 H(+). The enzyme catalyses L-glutamine + H2O = L-glutamate + NH4(+). It carries out the reaction UTP + NH4(+) + ATP = CTP + ADP + phosphate + 2 H(+). The protein operates within pyrimidine metabolism; CTP biosynthesis via de novo pathway; CTP from UDP: step 2/2. Allosterically activated by GTP, when glutamine is the substrate; GTP has no effect on the reaction when ammonia is the substrate. The allosteric effector GTP functions by stabilizing the protein conformation that binds the tetrahedral intermediate(s) formed during glutamine hydrolysis. Inhibited by the product CTP, via allosteric rather than competitive inhibition. Its function is as follows. Catalyzes the ATP-dependent amination of UTP to CTP with either L-glutamine or ammonia as the source of nitrogen. Regulates intracellular CTP levels through interactions with the four ribonucleotide triphosphates. This is CTP synthase from Photorhabdus laumondii subsp. laumondii (strain DSM 15139 / CIP 105565 / TT01) (Photorhabdus luminescens subsp. laumondii).